Here is a 379-residue protein sequence, read N- to C-terminus: Acetylornithine aminotransferase (379 aa).

Residues 93–94 and Phe-120 each bind pyridoxal 5'-phosphate; that span reads GA. N(2)-acetyl-L-ornithine is bound at residue Arg-123. 205–208 lines the pyridoxal 5'-phosphate pocket; that stretch reads DEVQ. Position 234 is an N6-(pyridoxal phosphate)lysine (Lys-234). N(2)-acetyl-L-ornithine is bound at residue Ser-262. Thr-263 is a pyridoxal 5'-phosphate binding site.

This sequence belongs to the class-III pyridoxal-phosphate-dependent aminotransferase family. ArgD subfamily. As to quaternary structure, homodimer. Pyridoxal 5'-phosphate serves as cofactor.

It is found in the cytoplasm. The catalysed reaction is N(2)-acetyl-L-ornithine + 2-oxoglutarate = N-acetyl-L-glutamate 5-semialdehyde + L-glutamate. The protein operates within amino-acid biosynthesis; L-arginine biosynthesis; N(2)-acetyl-L-ornithine from L-glutamate: step 4/4. In Streptococcus mutans serotype c (strain ATCC 700610 / UA159), this protein is Acetylornithine aminotransferase.